Consider the following 207-residue polypeptide: Chloramphenicol acetyltransferase (207 aa).

The active-site Proton acceptor is His-186.

This sequence belongs to the chloramphenicol acetyltransferase family. Homotrimer.

It catalyses the reaction chloramphenicol + acetyl-CoA = chloramphenicol 3-acetate + CoA. In terms of biological role, this enzyme is an effector of chloramphenicol resistance in bacteria. The sequence is that of Chloramphenicol acetyltransferase from Campylobacter coli.